The following is a 570-amino-acid chain: Small ribosomal subunit protein uS2c (570 aa).

Residues methionine 1 to glutamine 306 form an N-terminal extension region. 2 TRAM domains span residues lysine 28–lysine 89 and alanine 104–valine 169.

It belongs to the universal ribosomal protein uS2 family.

The protein resides in the plastid. Its subcellular location is the chloroplast. This is Small ribosomal subunit protein uS2c (rps2-1) from Chlamydomonas reinhardtii (Chlamydomonas smithii).